The sequence spans 369 residues: Anhydro-N-acetylmuramic acid kinase (369 aa).

Glycine 12–aspartate 19 serves as a coordination point for ATP.

This sequence belongs to the anhydro-N-acetylmuramic acid kinase family.

The catalysed reaction is 1,6-anhydro-N-acetyl-beta-muramate + ATP + H2O = N-acetyl-D-muramate 6-phosphate + ADP + H(+). It participates in amino-sugar metabolism; 1,6-anhydro-N-acetylmuramate degradation. It functions in the pathway cell wall biogenesis; peptidoglycan recycling. Catalyzes the specific phosphorylation of 1,6-anhydro-N-acetylmuramic acid (anhMurNAc) with the simultaneous cleavage of the 1,6-anhydro ring, generating MurNAc-6-P. Is required for the utilization of anhMurNAc either imported from the medium or derived from its own cell wall murein, and thus plays a role in cell wall recycling. This Shewanella baltica (strain OS185) protein is Anhydro-N-acetylmuramic acid kinase.